The chain runs to 306 residues: Homoserine kinase (306 aa).

Residue 84 to 94 participates in ATP binding; that stretch reads PAGLGLGSSGA.

Belongs to the GHMP kinase family. Homoserine kinase subfamily.

It localises to the cytoplasm. The enzyme catalyses L-homoserine + ATP = O-phospho-L-homoserine + ADP + H(+). The protein operates within amino-acid biosynthesis; L-threonine biosynthesis; L-threonine from L-aspartate: step 4/5. Functionally, catalyzes the ATP-dependent phosphorylation of L-homoserine to L-homoserine phosphate. This Sulfurisphaera tokodaii (strain DSM 16993 / JCM 10545 / NBRC 100140 / 7) (Sulfolobus tokodaii) protein is Homoserine kinase.